A 224-amino-acid polypeptide reads, in one-letter code: Imidazole glycerol phosphate synthase subunit HisH (224 aa).

Residues 5–214 form the Glutamine amidotransferase type-1 domain; the sequence is DTIIIDTGCA…MKMNAGSFAG (210 aa). C80 functions as the Nucleophile in the catalytic mechanism. Active-site residues include H189 and E191.

Heterodimer of HisH and HisF.

The protein resides in the cytoplasm. It catalyses the reaction 5-[(5-phospho-1-deoxy-D-ribulos-1-ylimino)methylamino]-1-(5-phospho-beta-D-ribosyl)imidazole-4-carboxamide + L-glutamine = D-erythro-1-(imidazol-4-yl)glycerol 3-phosphate + 5-amino-1-(5-phospho-beta-D-ribosyl)imidazole-4-carboxamide + L-glutamate + H(+). The catalysed reaction is L-glutamine + H2O = L-glutamate + NH4(+). It participates in amino-acid biosynthesis; L-histidine biosynthesis; L-histidine from 5-phospho-alpha-D-ribose 1-diphosphate: step 5/9. Its function is as follows. IGPS catalyzes the conversion of PRFAR and glutamine to IGP, AICAR and glutamate. The HisH subunit catalyzes the hydrolysis of glutamine to glutamate and ammonia as part of the synthesis of IGP and AICAR. The resulting ammonia molecule is channeled to the active site of HisF. The protein is Imidazole glycerol phosphate synthase subunit HisH of Shewanella loihica (strain ATCC BAA-1088 / PV-4).